The following is a 595-amino-acid chain: Proline--tRNA ligase (595 aa).

Belongs to the class-II aminoacyl-tRNA synthetase family. ProS type 1 subfamily. As to quaternary structure, homodimer.

It is found in the cytoplasm. The enzyme catalyses tRNA(Pro) + L-proline + ATP = L-prolyl-tRNA(Pro) + AMP + diphosphate. Catalyzes the attachment of proline to tRNA(Pro) in a two-step reaction: proline is first activated by ATP to form Pro-AMP and then transferred to the acceptor end of tRNA(Pro). As ProRS can inadvertently accommodate and process non-cognate amino acids such as alanine and cysteine, to avoid such errors it has two additional distinct editing activities against alanine. One activity is designated as 'pretransfer' editing and involves the tRNA(Pro)-independent hydrolysis of activated Ala-AMP. The other activity is designated 'posttransfer' editing and involves deacylation of mischarged Ala-tRNA(Pro). The misacylated Cys-tRNA(Pro) is not edited by ProRS. This is Proline--tRNA ligase from Treponema denticola (strain ATCC 35405 / DSM 14222 / CIP 103919 / JCM 8153 / KCTC 15104).